The chain runs to 557 residues: Urocanate hydratase (557 aa).

A disordered region spans residues 1-20; that stretch reads MSNPRHNEREVRSPRGDELN. NAD(+) contacts are provided by residues 52-53, Q130, 176-178, E196, R201, 242-243, 263-267, 273-274, and Y322; these read GG, GMG, NA, QTSAH, and YL. C410 is a catalytic residue. G492 lines the NAD(+) pocket.

This sequence belongs to the urocanase family. Requires NAD(+) as cofactor.

It localises to the cytoplasm. It carries out the reaction 4-imidazolone-5-propanoate = trans-urocanate + H2O. It participates in amino-acid degradation; L-histidine degradation into L-glutamate; N-formimidoyl-L-glutamate from L-histidine: step 2/3. In terms of biological role, catalyzes the conversion of urocanate to 4-imidazolone-5-propionate. This Brucella anthropi (strain ATCC 49188 / DSM 6882 / CCUG 24695 / JCM 21032 / LMG 3331 / NBRC 15819 / NCTC 12168 / Alc 37) (Ochrobactrum anthropi) protein is Urocanate hydratase.